The sequence spans 950 residues: Leucine--tRNA ligase (950 aa).

The 'HIGH' region motif lies at 72–83 (PYPSGEGLHVGH). A 'KMSKS' region motif is present at residues 722–726 (KIGKS). K725 is a binding site for ATP.

Belongs to the class-I aminoacyl-tRNA synthetase family.

It localises to the cytoplasm. The catalysed reaction is tRNA(Leu) + L-leucine + ATP = L-leucyl-tRNA(Leu) + AMP + diphosphate. This is Leucine--tRNA ligase from Mycobacterium sp. (strain JLS).